A 259-amino-acid chain; its full sequence is Type III pantothenate kinase (259 aa).

6–13 (DIGNTNIT) contacts ATP. 113–116 (GADR) is a substrate binding site. Aspartate 115 (proton acceptor) is an active-site residue. Aspartate 135 lines the K(+) pocket. ATP is bound at residue threonine 138. Threonine 190 serves as a coordination point for substrate.

This sequence belongs to the type III pantothenate kinase family. As to quaternary structure, homodimer. The cofactor is NH4(+). K(+) serves as cofactor.

Its subcellular location is the cytoplasm. It carries out the reaction (R)-pantothenate + ATP = (R)-4'-phosphopantothenate + ADP + H(+). It functions in the pathway cofactor biosynthesis; coenzyme A biosynthesis; CoA from (R)-pantothenate: step 1/5. Its function is as follows. Catalyzes the phosphorylation of pantothenate (Pan), the first step in CoA biosynthesis. The chain is Type III pantothenate kinase from Endomicrobium trichonymphae.